The primary structure comprises 680 residues: DNA-directed RNA polymerase subunit beta' (680 aa).

Residues C69, C71, C87, and C90 each contribute to the Zn(2+) site. Mg(2+) contacts are provided by D489, D491, and D493.

This sequence belongs to the RNA polymerase beta' chain family. RpoC1 subfamily. In terms of assembly, in plastids the minimal PEP RNA polymerase catalytic core is composed of four subunits: alpha, beta, beta', and beta''. When a (nuclear-encoded) sigma factor is associated with the core the holoenzyme is formed, which can initiate transcription. The cofactor is Mg(2+). Zn(2+) serves as cofactor.

The protein localises to the plastid. The protein resides in the chloroplast. The catalysed reaction is RNA(n) + a ribonucleoside 5'-triphosphate = RNA(n+1) + diphosphate. DNA-dependent RNA polymerase catalyzes the transcription of DNA into RNA using the four ribonucleoside triphosphates as substrates. This is DNA-directed RNA polymerase subunit beta' from Lobularia maritima (Sweet alyssum).